The chain runs to 336 residues: DNA-directed RNA polymerase subunit alpha (336 aa).

Residues 1–232 (MIQKNWQELI…DQLGVFVNFD (232 aa)) form an alpha N-terminal domain (alpha-NTD) region. The segment at 248–336 (FNPALLKKVD…DLAKRYEDQY (89 aa)) is alpha C-terminal domain (alpha-CTD).

The protein belongs to the RNA polymerase alpha chain family. Homodimer. The RNAP catalytic core consists of 2 alpha, 1 beta, 1 beta' and 1 omega subunit. When a sigma factor is associated with the core the holoenzyme is formed, which can initiate transcription.

The enzyme catalyses RNA(n) + a ribonucleoside 5'-triphosphate = RNA(n+1) + diphosphate. Its function is as follows. DNA-dependent RNA polymerase catalyzes the transcription of DNA into RNA using the four ribonucleoside triphosphates as substrates. The protein is DNA-directed RNA polymerase subunit alpha of Rhizobium etli (strain CIAT 652).